Here is a 339-residue protein sequence, read N- to C-terminus: Ribosomal RNA small subunit methyltransferase C (339 aa).

This sequence belongs to the methyltransferase superfamily. RsmC family. In terms of assembly, monomer.

The protein localises to the cytoplasm. The catalysed reaction is guanosine(1207) in 16S rRNA + S-adenosyl-L-methionine = N(2)-methylguanosine(1207) in 16S rRNA + S-adenosyl-L-homocysteine + H(+). Its function is as follows. Specifically methylates the guanine in position 1207 of 16S rRNA in the 30S particle. This chain is Ribosomal RNA small subunit methyltransferase C, found in Aliivibrio fischeri (strain MJ11) (Vibrio fischeri).